We begin with the raw amino-acid sequence, 509 residues long: UDP-N-acetylmuramyl-tripeptide synthetase (509 aa).

Residue 124-130 (GTNGKTS) participates in ATP binding. UDP-N-acetyl-alpha-D-muramoyl-L-alanyl-D-glutamate contacts are provided by residues 164-165 (TT), serine 191, and arginine 199. At lysine 231 the chain carries N6-carboxylysine.

Belongs to the MurCDEF family. MurE subfamily. In terms of processing, carboxylation is probably crucial for Mg(2+) binding and, consequently, for the gamma-phosphate positioning of ATP.

It is found in the cytoplasm. Its pathway is cell wall biogenesis; peptidoglycan biosynthesis. In terms of biological role, catalyzes the addition of an amino acid to the nucleotide precursor UDP-N-acetylmuramoyl-L-alanyl-D-glutamate (UMAG) in the biosynthesis of bacterial cell-wall peptidoglycan. The protein is UDP-N-acetylmuramyl-tripeptide synthetase of Tropheryma whipplei (strain Twist) (Whipple's bacillus).